Consider the following 337-residue polypeptide: Eukaryotic translation initiation factor 3 subunit H (337 aa).

The MPN domain occupies 21–153 (VQCDGLAVMK…LKAYRLTPQA (133 aa)).

This sequence belongs to the eIF-3 subunit H family. As to quaternary structure, component of the eukaryotic translation initiation factor 3 (eIF-3) complex. The eIF-3 complex interacts with pix. Interacts with mxt.

The protein localises to the cytoplasm. In terms of biological role, component of the eukaryotic translation initiation factor 3 (eIF-3) complex, which is involved in protein synthesis of a specialized repertoire of mRNAs and, together with other initiation factors, stimulates binding of mRNA and methionyl-tRNAi to the 40S ribosome. The eIF-3 complex specifically targets and initiates translation of a subset of mRNAs involved in cell proliferation. The sequence is that of Eukaryotic translation initiation factor 3 subunit H from Drosophila grimshawi (Hawaiian fruit fly).